The sequence spans 167 residues: Shikimate kinase (167 aa).

12-17 is a binding site for ATP; it reads GSGKTT. Threonine 16 is a Mg(2+) binding site. Residues aspartate 34, arginine 58, and glycine 80 each contribute to the substrate site. Arginine 117 contributes to the ATP binding site. Residue arginine 135 participates in substrate binding. An ATP-binding site is contributed by arginine 152.

This sequence belongs to the shikimate kinase family. As to quaternary structure, monomer. Mg(2+) serves as cofactor.

It localises to the cytoplasm. It carries out the reaction shikimate + ATP = 3-phosphoshikimate + ADP + H(+). It participates in metabolic intermediate biosynthesis; chorismate biosynthesis; chorismate from D-erythrose 4-phosphate and phosphoenolpyruvate: step 5/7. Functionally, catalyzes the specific phosphorylation of the 3-hydroxyl group of shikimic acid using ATP as a cosubstrate. The polypeptide is Shikimate kinase (Salinispora tropica (strain ATCC BAA-916 / DSM 44818 / JCM 13857 / NBRC 105044 / CNB-440)).